The sequence spans 31 residues: Phallacidin proprotein 1 (31 aa).

A propeptide spanning residues 1 to 10 (MSDINATRLP) is cleaved from the precursor. A cross-link (cyclopeptide (Ala-Pro)) is located at residues 11 to 17 (AWLVDCP). The 2'-cysteinyl-6'-hydroxytryptophan sulfoxide (Trp-Cys) cross-link spans 12-16 (WLVDC). Residues 18-31 (CVGDDVNRLLTRGE) constitute a propeptide that is removed on maturation.

This sequence belongs to the MSDIN fungal toxin family. Processed by the macrocyclase-peptidase enzyme POPB to yield a toxic cyclic heptapeptide. POPB first removes 10 residues from the N-terminus. Conformational trapping of the remaining peptide forces the enzyme to release this intermediate rather than proceed to macrocyclization. The enzyme rebinds the remaining peptide in a different conformation and catalyzes macrocyclization of the N-terminal 7 residues.

Its function is as follows. Major toxin that belongs to the bicyclic heptapeptides called phallotoxins. Although structurally related to amatoxins, phallotoxins have a different mode of action, which is the stabilization of F-actin. Phallotoxins are poisonous when administered parenterally, but not orally because of poor absorption. The sequence is that of Phallacidin proprotein 1 (PHA1_2) from Amanita bisporigera (Destroying angel).